A 419-amino-acid chain; its full sequence is UDP-N-acetylglucosamine 1-carboxyvinyltransferase (419 aa).

22–23 (KN) is a binding site for phosphoenolpyruvate. R91 lines the UDP-N-acetyl-alpha-D-glucosamine pocket. Residue C115 is the Proton donor of the active site. At C115 the chain carries 2-(S-cysteinyl)pyruvic acid O-phosphothioketal. Residues 120–124 (RPVDL), 160–163 (KVSV), D305, and I327 each bind UDP-N-acetyl-alpha-D-glucosamine.

Belongs to the EPSP synthase family. MurA subfamily.

The protein localises to the cytoplasm. It carries out the reaction phosphoenolpyruvate + UDP-N-acetyl-alpha-D-glucosamine = UDP-N-acetyl-3-O-(1-carboxyvinyl)-alpha-D-glucosamine + phosphate. Its pathway is cell wall biogenesis; peptidoglycan biosynthesis. Functionally, cell wall formation. Adds enolpyruvyl to UDP-N-acetylglucosamine. The polypeptide is UDP-N-acetylglucosamine 1-carboxyvinyltransferase (Tolumonas auensis (strain DSM 9187 / NBRC 110442 / TA 4)).